Consider the following 763-residue polypeptide: Phosphoglycerol transferase I (763 aa).

4 helical membrane-spanning segments follow: residues 1-21, 26-46, 77-97, and 108-128; these read MSEL…AWKA, WWFA…ITLY, ILPG…LGWV, and VGYS…SPAF.

The protein belongs to the OpgB family.

The protein localises to the cell inner membrane. The catalysed reaction is a phosphatidylglycerol + a membrane-derived-oligosaccharide D-glucose = a 1,2-diacyl-sn-glycerol + a membrane-derived-oligosaccharide 6-(glycerophospho)-D-glucose.. It participates in glycan metabolism; osmoregulated periplasmic glucan (OPG) biosynthesis. Its function is as follows. Transfers a phosphoglycerol residue from phosphatidylglycerol to the membrane-bound nascent glucan backbones. This Salmonella heidelberg (strain SL476) protein is Phosphoglycerol transferase I.